Consider the following 398-residue polypeptide: Argininosuccinate synthase (398 aa).

Residue 9–17 coordinates ATP; the sequence is AYSGGLDTS. Residue Tyr-85 coordinates L-citrulline. Gly-115 serves as a coordination point for ATP. 3 residues coordinate L-aspartate: Thr-117, Asn-121, and Asp-122. Asn-121 lines the L-citrulline pocket. Positions 125, 173, 258, and 270 each coordinate L-citrulline.

This sequence belongs to the argininosuccinate synthase family. Type 1 subfamily. As to quaternary structure, homotetramer.

The protein localises to the cytoplasm. It catalyses the reaction L-citrulline + L-aspartate + ATP = 2-(N(omega)-L-arginino)succinate + AMP + diphosphate + H(+). Its pathway is amino-acid biosynthesis; L-arginine biosynthesis; L-arginine from L-ornithine and carbamoyl phosphate: step 2/3. The chain is Argininosuccinate synthase from Streptococcus pneumoniae (strain ATCC BAA-255 / R6).